The following is a 572-amino-acid chain: Phosphoenolpyruvate-protein phosphotransferase (572 aa).

Catalysis depends on H191, which acts as the Tele-phosphohistidine intermediate. Phosphoenolpyruvate-binding residues include R298 and R334. Positions 433 and 457 each coordinate Mg(2+). Residues 456-457 (ND) and R467 each bind phosphoenolpyruvate. The Proton donor role is filled by C504.

Belongs to the PEP-utilizing enzyme family. As to quaternary structure, homodimer. Requires Mg(2+) as cofactor.

The protein localises to the cytoplasm. It catalyses the reaction L-histidyl-[protein] + phosphoenolpyruvate = N(pros)-phospho-L-histidyl-[protein] + pyruvate. Its function is as follows. General (non sugar-specific) component of the phosphoenolpyruvate-dependent sugar phosphotransferase system (sugar PTS). This major carbohydrate active-transport system catalyzes the phosphorylation of incoming sugar substrates concomitantly with their translocation across the cell membrane. Enzyme I transfers the phosphoryl group from phosphoenolpyruvate (PEP) to the phosphoryl carrier protein (HPr). This Staphylococcus aureus (strain MSSA476) protein is Phosphoenolpyruvate-protein phosphotransferase.